A 93-amino-acid chain; its full sequence is Protein YzgL (93 aa).

This is Protein YzgL (yzgL) from Escherichia coli (strain K12).